The sequence spans 568 residues: Sulfite reductase [NADPH] hemoprotein beta-component (568 aa).

Positions 425, 431, 470, and 474 each coordinate [4Fe-4S] cluster. Residue cysteine 474 participates in siroheme binding.

The protein belongs to the nitrite and sulfite reductase 4Fe-4S domain family. In terms of assembly, alpha(8)-beta(8). The alpha component is a flavoprotein, the beta component is a hemoprotein. The cofactor is siroheme. Requires [4Fe-4S] cluster as cofactor.

The catalysed reaction is hydrogen sulfide + 3 NADP(+) + 3 H2O = sulfite + 3 NADPH + 4 H(+). It participates in sulfur metabolism; hydrogen sulfide biosynthesis; hydrogen sulfide from sulfite (NADPH route): step 1/1. Its function is as follows. Component of the sulfite reductase complex that catalyzes the 6-electron reduction of sulfite to sulfide. This is one of several activities required for the biosynthesis of L-cysteine from sulfate. The polypeptide is Sulfite reductase [NADPH] hemoprotein beta-component (Xanthomonas campestris pv. campestris (strain ATCC 33913 / DSM 3586 / NCPPB 528 / LMG 568 / P 25)).